Here is a 124-residue protein sequence, read N- to C-terminus: Small ribosomal subunit protein uS13 (124 aa).

Residues 95 to 124 (GLPVRGQRTHTNARTRKGPRRSVMGKRKKA) are disordered.

This sequence belongs to the universal ribosomal protein uS13 family. Part of the 30S ribosomal subunit. Forms a loose heterodimer with protein S19. Forms two bridges to the 50S subunit in the 70S ribosome.

Located at the top of the head of the 30S subunit, it contacts several helices of the 16S rRNA. In the 70S ribosome it contacts the 23S rRNA (bridge B1a) and protein L5 of the 50S subunit (bridge B1b), connecting the 2 subunits; these bridges are implicated in subunit movement. Contacts the tRNAs in the A and P-sites. The sequence is that of Small ribosomal subunit protein uS13 from Syntrophobacter fumaroxidans (strain DSM 10017 / MPOB).